The following is a 257-amino-acid chain: Snake venom serine protease Haly-2 (257 aa).

The first 18 residues, 1-18, serve as a signal peptide directing secretion; the sequence is MVLIRVLANLLILQLSYA. Positions 19-24 are excised as a propeptide; sequence QKSSEL. The 224-residue stretch at 25–248 folds into the Peptidase S1 domain; the sequence is IIGGDECNIN…HLEWIRSIIA (224 aa). Intrachain disulfides connect Cys31/Cys162, Cys49/Cys65, Cys97/Cys255, Cys141/Cys209, Cys173/Cys188, and Cys199/Cys224. His64 (charge relay system) is an active-site residue. Residue Asn100 is glycosylated (N-linked (GlcNAc...) asparagine). Asp109 acts as the Charge relay system in catalysis. The active-site Charge relay system is Ser203.

Belongs to the peptidase S1 family. Snake venom subfamily. As to quaternary structure, monomer. In terms of tissue distribution, expressed by the venom gland.

The protein resides in the secreted. In terms of biological role, snake venom serine protease that may act in the hemostasis system of the prey. The chain is Snake venom serine protease Haly-2 from Gloydius brevicauda (Korean slamosa snake).